The chain runs to 636 residues: 1,4-alpha-glucan branching enzyme GlgB (636 aa).

D309 acts as the Nucleophile in catalysis. E362 functions as the Proton donor in the catalytic mechanism.

Belongs to the glycosyl hydrolase 13 family. GlgB subfamily. As to quaternary structure, monomer.

It carries out the reaction Transfers a segment of a (1-&gt;4)-alpha-D-glucan chain to a primary hydroxy group in a similar glucan chain.. It functions in the pathway glycan biosynthesis; glycogen biosynthesis. Catalyzes the formation of the alpha-1,6-glucosidic linkages in glycogen by scission of a 1,4-alpha-linked oligosaccharide from growing alpha-1,4-glucan chains and the subsequent attachment of the oligosaccharide to the alpha-1,6 position. This chain is 1,4-alpha-glucan branching enzyme GlgB, found in Aromatoleum aromaticum (strain DSM 19018 / LMG 30748 / EbN1) (Azoarcus sp. (strain EbN1)).